The sequence spans 178 residues: Large ribosomal subunit protein uL6 (178 aa).

It belongs to the universal ribosomal protein uL6 family. Part of the 50S ribosomal subunit.

In terms of biological role, this protein binds to the 23S rRNA, and is important in its secondary structure. It is located near the subunit interface in the base of the L7/L12 stalk, and near the tRNA binding site of the peptidyltransferase center. The protein is Large ribosomal subunit protein uL6 of Nautilia profundicola (strain ATCC BAA-1463 / DSM 18972 / AmH).